The chain runs to 266 residues: GTP-binding protein Rhes (266 aa).

GTP is bound at residue 26-33 (GASRVGKS). Residues 48–56 (YTPTIEDFH) carry the Effector region motif. GTP is bound by residues 73 to 77 (DTSGN) and 140 to 143 (NKND). The segment at 189–235 (MAKLPHEMSPALHHKISVQYGDAFHPRPFCMRRTKVAGAYGMVSPFA) is interaction with GNB1, GNB2 and GNB3. Cys-263 carries the post-translational modification Cysteine methyl ester. A lipid anchor (S-farnesyl cysteine) is attached at Cys-263. Residues 264 to 266 (SIQ) constitute a propeptide, removed in mature form.

This sequence belongs to the small GTPase superfamily. RasD family. Monomer (Potential). Interacts with PIK3CA and UBE2I. Interacts with GNB1, GNB2 and GNB3. In terms of processing, farnesylated. Farnesylation is required for membrane targeting. In terms of tissue distribution, highly expressed in brain; prominently in the striatum and weakly in kidney, thyroid, lung, heart and testis. Not expressed in liver. Expressed in pancreatic cell lines and in a embryonic stem cell line.

The protein localises to the cell membrane. Its function is as follows. GTPase signaling protein that binds to and hydrolyzes GTP. Regulates signaling pathways involving G-proteins-coupled receptor and heterotrimeric proteins such as GNB1, GNB2 and GNB3. May be involved in selected striatal competencies, mainly locomotor activity and motor coordination. In Mus musculus (Mouse), this protein is GTP-binding protein Rhes (Rasd2).